The sequence spans 241 residues: Large ribosomal subunit protein uL1 (241 aa).

Belongs to the universal ribosomal protein uL1 family. As to quaternary structure, part of the 50S ribosomal subunit.

Binds directly to 23S rRNA. The L1 stalk is quite mobile in the ribosome, and is involved in E site tRNA release. In terms of biological role, protein L1 is also a translational repressor protein, it controls the translation of the L11 operon by binding to its mRNA. The protein is Large ribosomal subunit protein uL1 of Thermomicrobium roseum (strain ATCC 27502 / DSM 5159 / P-2).